The following is a 246-amino-acid chain: Polyhedrin (246 aa).

It belongs to the polyhedrin family.

In terms of biological role, major component of the virus occlusion bodies, which are large proteinaceous structures (polyhedra), that protect the virus from the outside environment for extended periods until they are ingested by insect larvae. The protein is Polyhedrin (PH) of Lepidoptera (butterflies and moths).